Reading from the N-terminus, the 171-residue chain is ATP synthase subunit b (171 aa).

A helical transmembrane segment spans residues 2–22; sequence FVVKMVLGFLILLSPLCATGL.

The protein belongs to the ATPase B chain family. As to quaternary structure, F-type ATPases have 2 components, F(1) - the catalytic core - and F(0) - the membrane proton channel. F(1) has five subunits: alpha(3), beta(3), gamma(1), delta(1), epsilon(1). F(0) has three main subunits: a(1), b(2) and c(10-14). The alpha and beta chains form an alternating ring which encloses part of the gamma chain. F(1) is attached to F(0) by a central stalk formed by the gamma and epsilon chains, while a peripheral stalk is formed by the delta and b chains.

It is found in the cell inner membrane. F(1)F(0) ATP synthase produces ATP from ADP in the presence of a proton or sodium gradient. F-type ATPases consist of two structural domains, F(1) containing the extramembraneous catalytic core and F(0) containing the membrane proton channel, linked together by a central stalk and a peripheral stalk. During catalysis, ATP synthesis in the catalytic domain of F(1) is coupled via a rotary mechanism of the central stalk subunits to proton translocation. Its function is as follows. Component of the F(0) channel, it forms part of the peripheral stalk, linking F(1) to F(0). This is ATP synthase subunit b from Helicobacter pylori (strain J99 / ATCC 700824) (Campylobacter pylori J99).